The following is a 362-amino-acid chain: D-alanine--D-alanine ligase (362 aa).

The ATP-grasp domain maps to 134–345; it reads KILAQRAGVP…YPDLITRLIR (212 aa). 170 to 225 contributes to the ATP binding site; sequence GQLGTSNLFVKPSNQGSSVGITHVTDDSNYAEALAEAFKYDDKVLVEEGIVGTEVE. 3 residues coordinate Mg(2+): Asp-298, Glu-312, and Asn-314.

This sequence belongs to the D-alanine--D-alanine ligase family. The cofactor is Mg(2+). It depends on Mn(2+) as a cofactor.

It is found in the cytoplasm. The enzyme catalyses 2 D-alanine + ATP = D-alanyl-D-alanine + ADP + phosphate + H(+). It functions in the pathway cell wall biogenesis; peptidoglycan biosynthesis. Functionally, cell wall formation. This chain is D-alanine--D-alanine ligase, found in Lactobacillus delbrueckii subsp. bulgaricus (strain ATCC 11842 / DSM 20081 / BCRC 10696 / JCM 1002 / NBRC 13953 / NCIMB 11778 / NCTC 12712 / WDCM 00102 / Lb 14).